A 620-amino-acid chain; its full sequence is Eukaryotic translation initiation factor 2-alpha kinase 1 (620 aa).

The segment at 1 to 38 is disordered; sequence MLGGGSVDGERDTDDDAAGAVAAPPAIDFPAEVSDPKY. A compositionally biased stretch (low complexity) spans 18 to 28; that stretch reads AGAVAAPPAID. The SIFI-degron motif lies at 85–104; it reads LHSKQVFKLLCQTFIKMGLL. One can recognise a Protein kinase domain in the interval 167-581; sequence FEELAILGKG…ALQLLQSELF (415 aa). ATP-binding positions include 173–181 and lysine 196; that span reads LGKGGYGRV. At threonine 283 the chain carries Phosphothreonine. Residues 408-413 form an HRM 1 repeat; the sequence is ACPYVM. Catalysis depends on aspartate 440, which acts as the Proton acceptor. Phosphothreonine; by autocatalysis occurs at positions 484 and 486. A Phosphothreonine modification is found at threonine 491. The HRM 2 repeat unit spans residues 550 to 555; the sequence is RCPVQA.

The protein belongs to the protein kinase superfamily. Ser/Thr protein kinase family. GCN2 subfamily. Synthesized in an inactive form that binds to the N-terminal domain of CDC37. Has to be associated with a multiprotein complex containing Hsp90, CDC37 and PPP5C for maturation and activation by autophosphorylation. The phosphatase PPP5C modulates this activation. Homodimer; homodimerizes in presence of heme, forming a disulfide-linked inactive homodimer. Interacts with DELE1; binds both to full-length DELE1 and processed form of DELE1 (S-DELE1) in response to stress, leading to activate its protein kinase activity and trigger the integrated stress response (ISR). In terms of processing, activated by autophosphorylation; phosphorylated predominantly on serine and threonine residues, but also on tyrosine residues. Autophosphorylation at Thr-486 is required for kinase activation. The active autophosphorylated form apparently is largely refractory to cellular heme fluctuations. Post-translationally, ubiquitinated and degraded by the SIFI complex once the mitochondrial stress has been resolved, thereby providing stress response silencing. Within the SIFI complex, UBR4 initiates ubiquitin chain that are further elongated or branched by KCMF1.

Its subcellular location is the cytoplasm. It carries out the reaction L-seryl-[protein] + ATP = O-phospho-L-seryl-[protein] + ADP + H(+). The catalysed reaction is L-threonyl-[protein] + ATP = O-phospho-L-threonyl-[protein] + ADP + H(+). With respect to regulation, in normal conditions, the protein kinase activity is inhibited; inhibition is relieved by various stress conditions. Inhibited by heme: in presence of heme, forms a disulfide-linked inactive homodimer. Heme depletion relieves inhibition and stimulates kinase activity by autophosphorylation. Inhibited by the heme metabolites biliverdin and bilirubin. Induced by oxidative stress generated by arsenite treatment. Binding of nitric oxide (NO) to the heme iron in the N-terminal heme-binding domain activates the kinase activity, while binding of carbon monoxide (CO) suppresses kinase activity. Protein kinase activity is also activated upon binding to DELE1 in response to various stress, triggering the integrated stress response (ISR): activated by full-length DELE1 in response to iron deficiency, while it is activated by the processed form of DELE1 (S-DELE1) in response to mitochondrial stress. Metabolic-stress sensing protein kinase that phosphorylates the alpha subunit of eukaryotic translation initiation factor 2 (EIF2S1/eIF-2-alpha) in response to various stress conditions. Key activator of the integrated stress response (ISR) required for adaptation to various stress, such as heme deficiency, oxidative stress, osmotic shock, mitochondrial dysfunction and heat shock. EIF2S1/eIF-2-alpha phosphorylation in response to stress converts EIF2S1/eIF-2-alpha in a global protein synthesis inhibitor, leading to a global attenuation of cap-dependent translation, while concomitantly initiating the preferential translation of ISR-specific mRNAs, such as the transcriptional activator ATF4, and hence allowing ATF4-mediated reprogramming. Acts as a key sensor of heme-deficiency: in normal conditions, binds hemin via a cysteine thiolate and histidine nitrogenous coordination, leading to inhibit the protein kinase activity. This binding occurs with moderate affinity, allowing it to sense the heme concentration within the cell: heme depletion relieves inhibition and stimulates kinase activity, activating the ISR. Thanks to this unique heme-sensing capacity, plays a crucial role to shut off protein synthesis during acute heme-deficient conditions. In red blood cells (RBCs), controls hemoglobin synthesis ensuring a coordinated regulation of the synthesis of its heme and globin moieties. It thereby plays an essential protective role for RBC survival in anemias of iron deficiency. Iron deficiency also triggers activation by full-length DELE1. Also activates the ISR in response to mitochondrial dysfunction: HRI/EIF2AK1 protein kinase activity is activated upon binding to the processed form of DELE1 (S-DELE1), thereby promoting the ATF4-mediated reprogramming. Also acts as an activator of mitophagy in response to mitochondrial damage: catalyzes phosphorylation of eIF-2-alpha (EIF2S1) following activation by S-DELE1, thereby promoting mitochondrial localization of EIF2S1, triggering PRKN-independent mitophagy. This is Eukaryotic translation initiation factor 2-alpha kinase 1 from Rattus norvegicus (Rat).